A 337-amino-acid chain; its full sequence is Glyceraldehyde-3-phosphate dehydrogenase (337 aa).

Residues 12–13, aspartate 34, and lysine 79 contribute to the NAD(+) site; that span reads RI. Residues 150-152, threonine 181, 210-211, and arginine 233 each bind D-glyceraldehyde 3-phosphate; these read SCT and TG. The active-site Nucleophile is cysteine 151. Asparagine 315 lines the NAD(+) pocket.

The protein belongs to the glyceraldehyde-3-phosphate dehydrogenase family. In terms of assembly, homotetramer.

Its subcellular location is the cytoplasm. The enzyme catalyses D-glyceraldehyde 3-phosphate + phosphate + NAD(+) = (2R)-3-phospho-glyceroyl phosphate + NADH + H(+). It functions in the pathway carbohydrate degradation; glycolysis; pyruvate from D-glyceraldehyde 3-phosphate: step 1/5. In Phaeosphaeria nodorum (strain SN15 / ATCC MYA-4574 / FGSC 10173) (Glume blotch fungus), this protein is Glyceraldehyde-3-phosphate dehydrogenase (GPD1).